The primary structure comprises 382 residues: V-type proton ATPase subunit C 1 (382 aa).

An N-acetylthreonine modification is found at Thr-2.

It belongs to the V-ATPase C subunit family. As to quaternary structure, V-ATPase is a heteromultimeric enzyme made up of two complexes: the ATP-hydrolytic V1 complex and the proton translocation V0 complex. The V1 complex consists of three catalytic AB heterodimers that form a heterohexamer, three peripheral stalks each consisting of EG heterodimers, one central rotor including subunits D and F, and the regulatory subunits C and H. The proton translocation complex V0 consists of the proton transport subunit a, a ring of proteolipid subunits c9c'', rotary subunit d, subunits e and f, and the accessory subunits ATP6AP1/Ac45 and ATP6AP2/PRR. Expressed in brain (at protein level).

The protein resides in the cytoplasmic vesicle. It is found in the secretory vesicle. It localises to the synaptic vesicle membrane. Its subcellular location is the clathrin-coated vesicle membrane. Its function is as follows. Subunit of the V1 complex of vacuolar(H+)-ATPase (V-ATPase), a multisubunit enzyme composed of a peripheral complex (V1) that hydrolyzes ATP and a membrane integral complex (V0) that translocates protons. V-ATPase is responsible for acidifying and maintaining the pH of intracellular compartments and in some cell types, is targeted to the plasma membrane, where it is responsible for acidifying the extracellular environment. Subunit C is necessary for the assembly of the catalytic sector of the enzyme and is likely to have a specific function in its catalytic activity. This is V-type proton ATPase subunit C 1 (ATP6V1C1) from Bos taurus (Bovine).